The primary structure comprises 185 residues: Prenylated Rab acceptor protein 1 (185 aa).

The Cytoplasmic segment spans residues 1 to 78 (MAAQKDQQKD…RNVEYYQSNY (78 aa)). The tract at residues 30–54 (AGREWLERRRATIRPWSTFVDQQRF) is required for interaction with prenylated RAB3A and VAMP2. The next 2 membrane-spanning stretches (helical) occupy residues 79 to 94 (VFVF…VTSP) and 95 to 112 (MLLV…ILYL). Over 113-131 (RTLESKLVLFGREVSPAHQ) the chain is Cytoplasmic. 2 helical membrane passes run 132-148 (YALA…LAGA) and 149-165 (GSAV…VIGS). The tract at residues 165–185 (SHAAFHQIEAVDGEELQMEPV) is required for interaction with GDI1. At 166 to 185 (HAAFHQIEAVDGEELQMEPV) the chain is on the cytoplasmic side. The required for interaction with prenylated RAB3A and VAMP2 stretch occupies residues 175-185 (VDGEELQMEPV). The homodimerization stretch occupies residues 175–185 (VDGEELQMEPV).

This sequence belongs to the PRA1 family. Homodimer. Interacts with VAMP2 (synaptobrevin-2), GDI1, and PCLO. Interacts specifically with prenylated Rab proteins; strongly with RAB4B, RAB5A and RAB5C, and weakly with RAB4A, RAB6, RAB7A, RAB17 and RAB22. Interacts with NDRG1. Ubiquitous. Strongest expression found in placenta, pituitary gland, kidney, lung and stomach.

Its subcellular location is the cell membrane. It localises to the cytoplasm. The protein resides in the golgi apparatus. It is found in the cytoplasmic vesicle. The protein localises to the secretory vesicle. Its subcellular location is the synaptic vesicle. Functionally, general Rab protein regulator required for vesicle formation from the Golgi complex. May control vesicle docking and fusion by mediating the action of Rab GTPases to the SNARE complexes. In addition it inhibits the removal of Rab GTPases from the membrane by GDI. The protein is Prenylated Rab acceptor protein 1 (RABAC1) of Homo sapiens (Human).